The following is a 1095-amino-acid chain: Putative disease resistance protein At4g11170 (1095 aa).

In terms of domain architecture, TIR spans Trp9–Leu173. Glu84 is a catalytic residue. The 287-residue stretch at Asp168–Ile454 folds into the NB-ARC domain. LRR repeat units lie at residues Cys609–Arg631, Asn632–Thr654, Lys655–Leu677, His679–Pro701, Ser702–Thr722, and Asn723–Trp744.

The enzyme catalyses NAD(+) + H2O = ADP-D-ribose + nicotinamide + H(+). The sequence is that of Putative disease resistance protein At4g11170 from Arabidopsis thaliana (Mouse-ear cress).